The following is a 123-amino-acid chain: Plasminogen (123 aa).

The Kringle domain occupies 40–118 (DCYHGNGQSY…RWEFCNLKKC (79 aa)). Disulfide bonds link Cys-41–Cys-118, Cys-62–Cys-101, and Cys-90–Cys-113.

It belongs to the peptidase S1 family. Plasminogen subfamily. As to quaternary structure, interacts with CSPG4 and AMOT. Interacts (via the Kringle domains) with HRG; the interaction tethers PLG to the cell surface and enhances its activation. Interacts (via Kringle 4 domain) with ADA; the interaction stimulates PLG activation when in complex with DPP4. Angiostatin: Interacts with ATP5F1A; the interaction inhibits most of the angiogenic effects of angiostatin.

Its subcellular location is the secreted. The enzyme catalyses Preferential cleavage: Lys-|-Xaa &gt; Arg-|-Xaa, higher selectivity than trypsin. Converts fibrin into soluble products.. Converted into plasmin by plasminogen activators, both plasminogen and its activator being bound to fibrin. Cannot be activated with streptokinase. Its function is as follows. Plasmin dissolves the fibrin of blood clots and acts as a proteolytic factor in a variety of other processes including embryonic development, tissue remodeling, tumor invasion, and inflammation. In ovulation, weakens the walls of the Graafian follicle. It activates the urokinase-type plasminogen activator, collagenases and several complement zymogens, such as C1, C4 and C5. Cleavage of fibronectin and laminin leads to cell detachment and apoptosis. Also cleaves fibrin, thrombospondin and von Willebrand factor. Its role in tissue remodeling and tumor invasion may be modulated by CSPG4. Binds to cells. In Capra hircus (Goat), this protein is Plasminogen (PLG).